Consider the following 71-residue polypeptide: UPF0346 protein SSU05_1322 (71 aa).

This sequence belongs to the UPF0346 family.

The protein is UPF0346 protein SSU05_1322 of Streptococcus suis (strain 05ZYH33).